Here is a 129-residue protein sequence, read N- to C-terminus: KVFGRCELAAAMKRHGLDNYRGYSLGNWVCAAKFESNFNSQATNRNTDGSTDYGVLQINSRWWCNDGRTPGSRNLCNIPCSALLSSDITATVNCAKKIVSDGNGMNAWVAWRNRCKGTDVHAWIRGCRL.

The region spanning 1–129 is the C-type lysozyme domain; sequence KVFGRCELAA…VHAWIRGCRL (129 aa). Cystine bridges form between Cys6/Cys127, Cys30/Cys115, Cys64/Cys80, and Cys76/Cys94. Residues Glu35 and Asp52 contribute to the active site.

It belongs to the glycosyl hydrolase 22 family. As to quaternary structure, monomer.

The protein resides in the secreted. It carries out the reaction Hydrolysis of (1-&gt;4)-beta-linkages between N-acetylmuramic acid and N-acetyl-D-glucosamine residues in a peptidoglycan and between N-acetyl-D-glucosamine residues in chitodextrins.. Lysozymes have primarily a bacteriolytic function; those in tissues and body fluids are associated with the monocyte-macrophage system and enhance the activity of immunoagents. The polypeptide is Lysozyme C (LYZ) (Callipepla californica (California quail)).